The chain runs to 269 residues: 3-methyl-2-oxobutanoate hydroxymethyltransferase (269 aa).

Mg(2+)-binding residues include Asp-43 and Asp-82. Residues 43-44, Asp-82, and Lys-110 contribute to the 3-methyl-2-oxobutanoate site; that span reads DS. Glu-112 contributes to the Mg(2+) binding site. Glu-179 serves as the catalytic Proton acceptor.

Belongs to the PanB family. As to quaternary structure, homodecamer; pentamer of dimers. It depends on Mg(2+) as a cofactor.

It is found in the cytoplasm. It catalyses the reaction 3-methyl-2-oxobutanoate + (6R)-5,10-methylene-5,6,7,8-tetrahydrofolate + H2O = 2-dehydropantoate + (6S)-5,6,7,8-tetrahydrofolate. It functions in the pathway cofactor biosynthesis; (R)-pantothenate biosynthesis; (R)-pantoate from 3-methyl-2-oxobutanoate: step 1/2. Functionally, catalyzes the reversible reaction in which hydroxymethyl group from 5,10-methylenetetrahydrofolate is transferred onto alpha-ketoisovalerate to form ketopantoate. The sequence is that of 3-methyl-2-oxobutanoate hydroxymethyltransferase from Acinetobacter baumannii (strain AB307-0294).